A 382-amino-acid polypeptide reads, in one-letter code: Queuine tRNA-ribosyltransferase (382 aa).

Asp-96 acts as the Proton acceptor in catalysis. Substrate is bound by residues 96–100 (DSGGF), Asp-151, Gln-194, and Gly-221. The interval 252–258 (GVGAPDS) is RNA binding. Catalysis depends on Asp-271, which acts as the Nucleophile. An RNA binding; important for wobble base 34 recognition region spans residues 276–280 (TRIAR). Zn(2+) contacts are provided by Cys-309, Cys-311, Cys-314, and His-340.

It belongs to the queuine tRNA-ribosyltransferase family. In terms of assembly, homodimer. Within each dimer, one monomer is responsible for RNA recognition and catalysis, while the other monomer binds to the replacement base PreQ1. The cofactor is Zn(2+).

The catalysed reaction is 7-aminomethyl-7-carbaguanine + guanosine(34) in tRNA = 7-aminomethyl-7-carbaguanosine(34) in tRNA + guanine. It participates in tRNA modification; tRNA-queuosine biosynthesis. Functionally, catalyzes the base-exchange of a guanine (G) residue with the queuine precursor 7-aminomethyl-7-deazaguanine (PreQ1) at position 34 (anticodon wobble position) in tRNAs with GU(N) anticodons (tRNA-Asp, -Asn, -His and -Tyr). Catalysis occurs through a double-displacement mechanism. The nucleophile active site attacks the C1' of nucleotide 34 to detach the guanine base from the RNA, forming a covalent enzyme-RNA intermediate. The proton acceptor active site deprotonates the incoming PreQ1, allowing a nucleophilic attack on the C1' of the ribose to form the product. After dissociation, two additional enzymatic reactions on the tRNA convert PreQ1 to queuine (Q), resulting in the hypermodified nucleoside queuosine (7-(((4,5-cis-dihydroxy-2-cyclopenten-1-yl)amino)methyl)-7-deazaguanosine). The polypeptide is Queuine tRNA-ribosyltransferase (Lactococcus lactis subsp. cremoris (strain MG1363)).